Reading from the N-terminus, the 237-residue chain is Class B acid phosphatase (237 aa).

Residues Met1–Ala23 form the signal peptide. Asp69 functions as the Nucleophile in the catalytic mechanism. Mg(2+) contacts are provided by Asp69 and Asp71. The active-site Proton donor is Asp71. Residues Thr137–Gly138 and Lys177 each bind substrate. Asp192 contacts Mg(2+).

It belongs to the class B bacterial acid phosphatase family. As to quaternary structure, homotetramer. It depends on Mg(2+) as a cofactor.

It localises to the periplasm. The enzyme catalyses a phosphate monoester + H2O = an alcohol + phosphate. Nucleosides, and particularly 2'-deoxyribonucleosides, are potent inhibitors of the phosphatase activity. The phosphatase activity is also inhibited by inorganic phosphate and EDTA in vitro. Its function is as follows. Dephosphorylates several organic phosphate monoesters such as 3'-UMP, 5'-UMP and pNPP. Also has a phosphotransferase activity catalyzing the transfer of low-energy phosphate groups from organic phosphate monoesters to free hydroxyl groups of various organic compounds such as the 2'-, 3-, or 5'-hydroxyls of nucleosides and nucleotides. Also displays significant phosphomutase activity since it is able to catalyze the transfer of the phosphate group of 3'-AMP from the 3'-position both to the 2'- and 5'-positions. One of the physiological functions of the phosphohydrolytic activity of the enzyme is believed to be the scavenging of organic phosphate esters that otherwise cannot pass the cytoplasmic membrane. This chain is Class B acid phosphatase (aphA), found in Salmonella typhimurium (strain LT2 / SGSC1412 / ATCC 700720).